The following is a 173-amino-acid chain: MAAMASLGALALLLLSSLSRCSAEACLEPQITPSYYTTSDAVISTETVFIVEISLTCKNRVQNMALYADVGGKQFPVTRGQDVGRYQVSWSLDHKSAHAGTYEVRFFDEESYSLLRKAQRNNEDISIIPPLFTVSVDHRGTWNGPWVSTEVLAAAIGLVIYYLAFSAKSHIQA.

A signal peptide spans 1–23 (MAAMASLGALALLLLSSLSRCSA). The Lumenal portion of the chain corresponds to 24 to 144 (EACLEPQITP…SVDHRGTWNG (121 aa)). Cys26 and Cys57 form a disulfide bridge. Lys73 is covalently cross-linked (Glycyl lysine isopeptide (Lys-Gly) (interchain with G-Cter in ubiquitin)). Residues 145–165 (PWVSTEVLAAAIGLVIYYLAF) form a helical membrane-spanning segment. Over 166–173 (SAKSHIQA) the chain is Cytoplasmic.

Belongs to the TRAP-delta family. Heterotetramer of TRAP-alpha, TRAP-beta, TRAP-delta and TRAP-gamma.

It is found in the endoplasmic reticulum membrane. Its function is as follows. TRAP proteins are part of a complex whose function is to bind calcium to the ER membrane and thereby regulate the retention of ER resident proteins. This is Translocon-associated protein subunit delta (SSR4) from Homo sapiens (Human).